Consider the following 104-residue polypeptide: L-rhamnose mutarotase (104 aa).

Substrate is bound at residue tyrosine 18. Histidine 22 serves as the catalytic Proton donor. Substrate is bound by residues tyrosine 41 and 76–77 (WW).

This sequence belongs to the rhamnose mutarotase family. Homodimer.

It localises to the cytoplasm. It catalyses the reaction alpha-L-rhamnose = beta-L-rhamnose. The protein operates within carbohydrate metabolism; L-rhamnose metabolism. Involved in the anomeric conversion of L-rhamnose. In Escherichia coli (strain K12 / MC4100 / BW2952), this protein is L-rhamnose mutarotase.